A 367-amino-acid polypeptide reads, in one-letter code: Metacaspase-1 (367 aa).

The interval 47–77 (DPRTAPPPQPSSAPSPPPQIHAPPGQLPHPH) is disordered. Over residues 50–73 (TAPPPQPSSAPSPPPQIHAPPGQL) the composition is skewed to pro residues. Active-site residues include H164 and C220.

The protein belongs to the peptidase C14B family. As to quaternary structure, interacts (via N-terminus) with LSD1. In terms of processing, proteolytically processed; by an autocatalytic mechanism.

Functionally, cysteine protease that cleaves specifically after arginine or lysine residues. Does not cleave caspase-specific substrates. Acts as a positive regulator of cell death. Required for both oxidative stress cell death response and hypersensitive cell death response mediated by immune response. This is Metacaspase-1 (AMC1) from Arabidopsis thaliana (Mouse-ear cress).